The primary structure comprises 117 residues: Ig heavy chain V region 345 (117 aa).

A signal peptide spans 1-19 (MNFGLRLIFLVLTLKGVKC). The segment at 20–49 (EVQLVESGGGLVKPGGSLKLSCAASGFAFS) is framework-1. Cysteines 41 and 115 form a disulfide. Residues 50–54 (SYDMS) form a complementarity-determining-1 region. Positions 55–68 (WVRQTPEKRLEWVA) are framework-2. Residues 69 to 85 (YISSGGGSTYYPDTVKG) are complementarity-determining-2. The framework-3 stretch occupies residues 86-117 (RFTISRDNAKNTLYLQMSSLKSEDTAMYYCAR).

The polypeptide is Ig heavy chain V region 345 (Mus musculus (Mouse)).